The primary structure comprises 233 residues: DNA repair protein RecO (233 aa).

It belongs to the RecO family.

Functionally, involved in DNA repair and RecF pathway recombination. The sequence is that of DNA repair protein RecO from Francisella philomiragia subsp. philomiragia (strain ATCC 25017 / CCUG 19701 / FSC 153 / O#319-036).